The primary structure comprises 383 residues: Mannan endo-1,4-beta-mannosidase A (383 aa).

The first 18 residues, 1–18 (MKFSQALLSLASLALAAA), serve as a signal peptide directing secretion. Asn-75 carries N-linked (GlcNAc...) asparagine glycosylation. Trp-97 is a substrate binding site. The N-linked (GlcNAc...) asparagine glycan is linked to Asn-199. Substrate contacts are provided by residues Asn-210 and 211–213 (EPR). The active-site Proton donor/acceptor is the Glu-211. The cysteines at positions 214 and 217 are disulfide-linked. Residues Tyr-279 and Trp-283 each contribute to the substrate site. A disulfide bond links Cys-301 and Cys-308. Glu-312 functions as the Nucleophile in the catalytic mechanism. An intrachain disulfide couples Cys-320 to Cys-369. Asn-332 is a glycosylation site (N-linked (GlcNAc...) asparagine). Residue Trp-342 coordinates substrate.

It belongs to the glycosyl hydrolase 5 (cellulase A) family. As to quaternary structure, monomer.

Its subcellular location is the secreted. It catalyses the reaction Random hydrolysis of (1-&gt;4)-beta-D-mannosidic linkages in mannans, galactomannans and glucomannans.. In terms of biological role, endo-1,4-mannanase that catalyzes the random hydrolysis of (1-&gt;4)-beta-D-mannosidic linkages in mannans and heteromannans. It is a crucial enzyme for depolymerization of seed galactomannans and wood galactoglucomannans. Active against locust bean gum and gum guar. Also has transglycosylation activity. The chain is Mannan endo-1,4-beta-mannosidase A (manA) from Emericella nidulans (strain FGSC A4 / ATCC 38163 / CBS 112.46 / NRRL 194 / M139) (Aspergillus nidulans).